The following is a 477-amino-acid chain: Glutamate--tRNA ligase (477 aa).

Positions 12–22 match the 'HIGH' region motif; the sequence is PSPTGMFHVGG. The Zn(2+) site is built by Cys-106, Cys-108, Cys-128, and Asp-130. Residues 238–242 carry the 'KMSKS' region motif; that stretch reads KLSKR. Lys-241 is an ATP binding site.

Belongs to the class-I aminoacyl-tRNA synthetase family. Glutamate--tRNA ligase type 1 subfamily. Monomer. It depends on Zn(2+) as a cofactor.

Its subcellular location is the cytoplasm. The catalysed reaction is tRNA(Glu) + L-glutamate + ATP = L-glutamyl-tRNA(Glu) + AMP + diphosphate. In terms of biological role, catalyzes the attachment of glutamate to tRNA(Glu) in a two-step reaction: glutamate is first activated by ATP to form Glu-AMP and then transferred to the acceptor end of tRNA(Glu). This is Glutamate--tRNA ligase from Thermobifida fusca (strain YX).